Here is a 574-residue protein sequence, read N- to C-terminus: Penicillin-binding protein activator LpoA (574 aa).

The signal sequence occupies residues 1 to 25; that stretch reads MTILLQRAKFKKRLMPILFPLMLAG. Cys-26 is lipidated: N-palmitoyl cysteine. The S-diacylglycerol cysteine moiety is linked to residue Cys-26.

It belongs to the LpoA family. In terms of assembly, interacts with PBP1a.

The protein localises to the cell outer membrane. Functionally, regulator of peptidoglycan synthesis that is essential for the function of penicillin-binding protein 1A (PBP1a). This is Penicillin-binding protein activator LpoA from Mannheimia succiniciproducens (strain KCTC 0769BP / MBEL55E).